The chain runs to 143 residues: Heat shock protein Hsp-16.41 (143 aa).

The sHSP domain maps to 35–140 (HNSFNFSDNI…SSRSIPINFV (106 aa)).

The protein belongs to the small heat shock protein (HSP20) family.

The protein is Heat shock protein Hsp-16.41 (hsp-16.41) of Caenorhabditis elegans.